A 348-amino-acid polypeptide reads, in one-letter code: Phospho-N-acetylmuramoyl-pentapeptide-transferase (348 aa).

10 helical membrane passes run 11 to 31 (SLIL…IFLG), 67 to 87 (TAGG…LLPL), 92 to 112 (TWLF…DDIV), 128 to 148 (FIVQ…IDKE), 163 to 183 (IFLG…MLAI), 198 to 218 (GLAT…AIMS), 222 to 242 (PLAY…LAFL), 251 to 271 (VFMG…CAVM), 276 to 296 (LFLI…ILQV), and 326 to 346 (VVAR…VAAL).

Belongs to the glycosyltransferase 4 family. MraY subfamily. Mg(2+) is required as a cofactor.

The protein resides in the cell inner membrane. The catalysed reaction is UDP-N-acetyl-alpha-D-muramoyl-L-alanyl-gamma-D-glutamyl-meso-2,6-diaminopimeloyl-D-alanyl-D-alanine + di-trans,octa-cis-undecaprenyl phosphate = di-trans,octa-cis-undecaprenyl diphospho-N-acetyl-alpha-D-muramoyl-L-alanyl-D-glutamyl-meso-2,6-diaminopimeloyl-D-alanyl-D-alanine + UMP. It functions in the pathway cell wall biogenesis; peptidoglycan biosynthesis. Catalyzes the initial step of the lipid cycle reactions in the biosynthesis of the cell wall peptidoglycan: transfers peptidoglycan precursor phospho-MurNAc-pentapeptide from UDP-MurNAc-pentapeptide onto the lipid carrier undecaprenyl phosphate, yielding undecaprenyl-pyrophosphoryl-MurNAc-pentapeptide, known as lipid I. The chain is Phospho-N-acetylmuramoyl-pentapeptide-transferase from Chlamydia felis (strain Fe/C-56) (Chlamydophila felis).